Reading from the N-terminus, the 739-residue chain is Bifunctional (p)ppGpp synthase/hydrolase RelA (739 aa).

In terms of domain architecture, HD spans 50 to 149 (YIVHPIQVAG…VKLADRLHNM (100 aa)). Mn(2+) is bound by residues histidine 53 and histidine 77. Catalysis depends on nucleophile, for hydrolase activity residues glutamate 81 and aspartate 82. Aspartate 144 is a binding site for Mn(2+). Aspartate 264 provides a ligand contact to Mg(2+). A TGS domain is found at 393–454 (ERIYVFTPTG…KTGDVVEIVT (62 aa)). Positions 664-739 (EIDIYGLNRR…DVYSVKRTNG (76 aa)) constitute an ACT domain.

It belongs to the RelA/SpoT family. Mg(2+) serves as cofactor. The cofactor is Mn(2+).

It carries out the reaction GTP + ATP = guanosine 3'-diphosphate 5'-triphosphate + AMP. The catalysed reaction is guanosine 3',5'-bis(diphosphate) + H2O = GDP + diphosphate + H(+). Its pathway is purine metabolism; ppGpp biosynthesis; ppGpp from GDP: step 1/1. The protein operates within purine metabolism; ppGpp biosynthesis; ppGpp from GTP: step 1/2. With respect to regulation, alpha-beta methylenyl ATP, an ATP-analog inhibitor of the synthase activity also reduces the hydrolase activity about 4-fold. In eubacteria ppGpp (guanosine 3'-diphosphate 5'-diphosphate) is a mediator of the stringent response that coordinates a variety of cellular activities in response to changes in nutritional abundance. This enzyme catalyzes both the formation of pppGpp which is then hydrolyzed to form ppGpp, and the hydrolysis of ppGpp. The enzyme does not simultaneously display both synthase and hydrolase activities. In the structure of residues 1-385 there are 2 conformations seen, the hydrolase-OFF/synthase-ON and hydrolase-ON/synthase-OFF, suggesting there is ligand-induced signal transmission between the 2 active sites. The protein is Bifunctional (p)ppGpp synthase/hydrolase RelA (relA) of Streptococcus dysgalactiae subsp. equisimilis (Streptococcus equisimilis).